Reading from the N-terminus, the 496-residue chain is Alpha-amylase (496 aa).

C29 and C85 form a disulfide bridge. Residues N99, R155, and D164 each coordinate Ca(2+). A chloride-binding site is contributed by R192. Catalysis depends on D194, which acts as the Nucleophile. Ca(2+) is bound at residue H198. The active-site Proton donor is the E230. Position 332 (R332) interacts with chloride. Disulfide bonds link C374-C380 and C448-C460.

Belongs to the glycosyl hydrolase 13 family. In terms of assembly, monomer. It depends on Ca(2+) as a cofactor. Requires chloride as cofactor. Post-translationally, disulfide bonds are present.

Its subcellular location is the secreted. It carries out the reaction Endohydrolysis of (1-&gt;4)-alpha-D-glucosidic linkages in polysaccharides containing three or more (1-&gt;4)-alpha-linked D-glucose units.. With respect to regulation, inhibited by alpha-amylase inhibitors from wheat and rye. The most effective inhibitors are the wheat tetrameric alpha-amylase inhibitor (WTAI) and the rye dimeric alpha-amylase inhibitor (RDAI-1). Not inhibited by alpha-amylase inhibitor from barley. In terms of biological role, aids in the digestion of starch and glycogen derived from food, such as skin scales, fungi and bacteria. The chain is Alpha-amylase from Dermatophagoides pteronyssinus (European house dust mite).